The chain runs to 293 residues: 3-methyl-2-oxobutanoate hydroxymethyltransferase (293 aa).

Residues 1-26 (MTQAPVTAGTPYGTIPPASPLPQRRP) form a disordered region. Mg(2+) contacts are provided by Asp-68 and Asp-111. 3-methyl-2-oxobutanoate contacts are provided by residues 68–69 (DS), Asp-111, and Lys-140. Glu-142 contributes to the Mg(2+) binding site. Glu-209 (proton acceptor) is an active-site residue.

Belongs to the PanB family. Homodecamer; pentamer of dimers. Mg(2+) is required as a cofactor.

The protein localises to the cytoplasm. The catalysed reaction is 3-methyl-2-oxobutanoate + (6R)-5,10-methylene-5,6,7,8-tetrahydrofolate + H2O = 2-dehydropantoate + (6S)-5,6,7,8-tetrahydrofolate. Its pathway is cofactor biosynthesis; (R)-pantothenate biosynthesis; (R)-pantoate from 3-methyl-2-oxobutanoate: step 1/2. Functionally, catalyzes the reversible reaction in which hydroxymethyl group from 5,10-methylenetetrahydrofolate is transferred onto alpha-ketoisovalerate to form ketopantoate. This chain is 3-methyl-2-oxobutanoate hydroxymethyltransferase, found in Delftia acidovorans (strain DSM 14801 / SPH-1).